Consider the following 592-residue polypeptide: Protein kinase C zeta type (592 aa).

A PB1 domain is found at 15 to 98 (RVRLKAHYGG…EVLIIHVFPS (84 aa)). Residues 79–145 (AFRLACQGRD…KRFNRRAYCG (67 aa)) form an interaction with SQSTM1 region. The Phorbol-ester/DAG-type zinc finger occupies 130 to 180 (GHLFQAKRFNRRAYCGQCSERIWGLARQGYRCINCKLLVHKRCHVLVPLTC). The 267-residue stretch at 252–518 (FDLIRVIGRG…FSDIKSHAFF (267 aa)) folds into the Protein kinase domain. Residues 258–266 (IGRGSYAKV) and lysine 281 each bind ATP. Aspartate 376 functions as the Proton acceptor in the catalytic mechanism. Threonine 410 is modified (phosphothreonine; by PDPK1 and PI3K). Residues 519–590 (RSIDWDLLEK…INPLLLSAEE (72 aa)) form the AGC-kinase C-terminal domain. Threonine 560 is subject to Phosphothreonine. Serine 591 bears the Phosphoserine mark.

Belongs to the protein kinase superfamily. AGC Ser/Thr protein kinase family. PKC subfamily. Interacts with PARD6A, PARD6B and PARD6G. Part of a complex with PARD3, PARD6A or PARD6B or PARD6G and CDC42 or RAC1. Interacts with ADAP1/CENTA1. Forms a ternary complex with SQSTM1 and KCNAB2. Forms another ternary complex with SQSTM1 and GABRR3. Forms a complex with SQSTM1 and MAP2K5. Interacts (via the protein kinase domain) with WWC1. Forms a tripartite complex with WWC1 and DDR1, but predominantly in the absence of collagen. Component of the Par polarity complex, composed of at least phosphorylated PRKCZ, PARD3 and TIAM1. Interacts with PDPK1 (via N-terminal region). Interacts with WDFY2 (via WD repeats 1-3). Interacts with VAMP2. Forms a complex with WDFY2 and VAMP2. Interacts with APPL1. Interacts with WWC1, WWC2 and WWC3. In terms of processing, CDH5 is required for its phosphorylation at Thr-410. Phosphorylated by protein kinase PDPK1; phosphorylation is inhibited by the apoptotic C-terminal cleavage product of PKN2. Phosphorylation at Thr-410 by PI3K activates the kinase. Isoform 1: In brain, expressed in hippocampus, neocortex and cerebellum (at protein level). Also expressed in lung, liver, kidney, testis and to a lesser extent in pancreas, intestine and skin (at protein level). Isoform 2: Specifically expressed in brain where it localizes to the hippocampus, neocortex and cerebellum (at protein level).

It localises to the cytoplasm. The protein resides in the endosome. The protein localises to the cell junction. Its subcellular location is the membrane. The catalysed reaction is L-seryl-[protein] + ATP = O-phospho-L-seryl-[protein] + ADP + H(+). It carries out the reaction L-threonyl-[protein] + ATP = O-phospho-L-threonyl-[protein] + ADP + H(+). Atypical PKCs (PRKCI and PRKCZ) exhibit an elevated basal enzymatic activity (that may be due to the interaction with SMG1 or SQSTM1) and are not regulated by diacylglycerol, phosphatidylserine, phorbol esters or calcium ions. Two specific sites, Thr-410 (activation loop of the kinase domain) and Thr-560 (turn motif), need to be phosphorylated for its full activation. Phosphatidylinositol 3,4,5-trisphosphate might be a physiological activator. Isoform 2: Constitutively active. Calcium- and diacylglycerol-independent serine/threonine-protein kinase that functions in phosphatidylinositol 3-kinase (PI3K) pathway and mitogen-activated protein (MAP) kinase cascade, and is involved in NF-kappa-B activation, mitogenic signaling, cell proliferation, cell polarity, inflammatory response and maintenance of long-term potentiation (LTP). Upon lipopolysaccharide (LPS) treatment in macrophages, or following mitogenic stimuli, functions downstream of PI3K to activate MAP2K1/MEK1-MAPK1/ERK2 signaling cascade independently of RAF1 activation. Required for insulin-dependent activation of AKT3, but may function as an adapter rather than a direct activator. Upon insulin treatment may act as a downstream effector of PI3K and contribute to the activation of translocation of the glucose transporter SLC2A4/GLUT4 and subsequent glucose transport in adipocytes. In EGF-induced cells, binds and activates MAP2K5/MEK5-MAPK7/ERK5 independently of its kinase activity and can activate JUN promoter through MEF2C. Through binding with SQSTM1/p62, functions in interleukin-1 signaling and activation of NF-kappa-B with the specific adapters RIPK1 and TRAF6. Participates in TNF-dependent transactivation of NF-kappa-B by phosphorylating and activating IKBKB kinase, which in turn leads to the degradation of NF-kappa-B inhibitors. In migrating astrocytes, forms a cytoplasmic complex with PARD6A and is recruited by CDC42 to function in the establishment of cell polarity along with the microtubule motor and dynein. In association with FEZ1, stimulates neuronal differentiation in PC12 cells. In the inflammatory response, is required for the T-helper 2 (Th2) differentiation process, including interleukin production, efficient activation of JAK1 and the subsequent phosphorylation and nuclear translocation of STAT6. May be involved in development of allergic airway inflammation (asthma), a process dependent on Th2 immune response. In the NF-kappa-B-mediated inflammatory response, can relieve SETD6-dependent repression of NF-kappa-B target genes by phosphorylating the RELA subunit at 'Ser-311'. Phosphorylates VAMP2 in vitro. Phosphorylates and activates LRRK1, which phosphorylates RAB proteins involved in intracellular trafficking. Its function is as follows. Involved in late synaptic long term potentiation phase in CA1 hippocampal cells and long term memory maintenance. The protein is Protein kinase C zeta type (Prkcz) of Rattus norvegicus (Rat).